The following is a 168-amino-acid chain: uncharacterized protein (168 aa).

3 disordered regions span residues Met1–Asp35, Lys48–Asn97, and Ala126–Met168. Residues Lys29–Lys95 are a coiled coil. The span at Leu68–Met85 shows a compositional bias: basic and acidic residues. Over residues Ala126 to Lys139 the composition is skewed to polar residues. A compositionally biased stretch (basic and acidic residues) spans Thr140–Glu150. A compositionally biased stretch (basic residues) spans Val157 to Met168.

This is an uncharacterized protein from Schizosaccharomyces pombe (strain 972 / ATCC 24843) (Fission yeast).